Consider the following 139-residue polypeptide: Cystatin-11 (139 aa).

The N-terminal stretch at 1–28 is a signal peptide; the sequence is MMARLWKTTWFLLAILVALVAFSYQVKR. 2 disulfide bridges follow: cysteine 94-cysteine 102 and cysteine 115-cysteine 135. Asparagine 134 carries an N-linked (GlcNAc...) asparagine glycan.

This sequence belongs to the cystatin family.

It is found in the secreted. Its function is as follows. Has antibacterial activity against the Gram-negative bacteria E.coli. May play a role in sperm maturation and fertilization. This is Cystatin-11 (Cst11) from Rattus norvegicus (Rat).